A 540-amino-acid chain; its full sequence is MAPGSTMWLLGYIFLCFPVSFALIKQPKPETPTDPGVLHCRPWNFKFTINFQNQETGSSPVLVTWDNQGRLHRLQNDTDCGTRVGEGPGPSVVLEANYSSCYVTESEPYYVMLVGVEEVDAAGQNLVTKQQLLKCPMHLPAPDAGLCDSVPVQDRLPCATAPISQEDCEELGCCHSSEEVNACYYGNTVTSHCTQEGHFSIAVSRNVSSPPLHLDSVHLVFGNDSECQPVVATRAFVLFLFPFTACGTTRQITGDRAIYENELLATREVRTWSRGSITRDSIFRLRVSCSYSISSSALPVDMHVLTLPPPLPETQPGPLTVVLQIAKDKDYHSYYTMDDYPVVKLLRDPIYVDVSILYRTDPYLGLRLHQCWATPRTNPLYQPQWPILVKGCPYTGDNYQTQLIPVQEAFDLPFPSHHQRFSISTFSFLDSSVAKEALKGPIYLHCSVSVCQPTGTQSCTVTCPIDSRRRNSDINFQNSTANISSKGPMILLQATEDPSEKLHKHSGVPVHPGALWVAGLSGIFIIGALLVSYVAIRTRR.

A signal peptide spans 1 to 24 (MAPGSTMWLLGYIFLCFPVSFALI). The Extracellular segment spans residues 25–515 (KQPKPETPTD…SGVPVHPGAL (491 aa)). Asn-76 and Asn-97 each carry an N-linked (GlcNAc...) asparagine glycan. The region spanning 145–187 (GLCDSVPVQDRLPCATAPISQEDCEELGCCHSSEEVNACYYGN) is the P-type domain. Residues 192–470 (HCTQEGHFSI…VTCPIDSRRR (279 aa)) enclose the ZP domain. N-linked (GlcNAc...) asparagine glycans are attached at residues Asn-206 and Asn-223. Ser-296 carries O-linked (GalNAc...) serine glycosylation. A glycan (O-linked (GalNAc...) threonine) is linked at Thr-306. Cys-371 and Cys-446 form a disulfide bridge. Residues 467–540 (SRRRNSDINF…VSYVAIRTRR (74 aa)) constitute a propeptide, removed in mature form. 2 N-linked (GlcNAc...) asparagine glycosylation sites follow: Asn-478 and Asn-482. Residues 516–536 (WVAGLSGIFIIGALLVSYVAI) traverse the membrane as a helical segment. The Cytoplasmic portion of the chain corresponds to 537 to 540 (RTRR).

The protein belongs to the ZP domain family. ZPB subfamily. In terms of processing, proteolytically cleaved before the transmembrane segment to yield the secreted ectodomain incorporated in the zona pellucida. In terms of tissue distribution, expressed in oocytes (at protein level).

It is found in the zona pellucida. Its subcellular location is the cell membrane. Component of the zona pellucida, an extracellular matrix surrounding oocytes which mediates sperm binding, induction of the acrosome reaction and prevents post-fertilization polyspermy. The zona pellucida is composed of 3 to 4 glycoproteins, ZP1, ZP2, ZP3, and ZP4. ZP4 may act as a sperm receptor. The sequence is that of Zona pellucida sperm-binding protein 4 (ZP4) from Oryctolagus cuniculus (Rabbit).